The primary structure comprises 2267 residues: Acetyl-CoA carboxylase 1 (2267 aa).

The Biotin carboxylation domain occupies 38-544; it reads PIHSVLVANN…HTGWLDSRIA (507 aa). In terms of domain architecture, ATP-grasp spans 190-384; it reads PESCNSIPEE…AAQVVVGMGV (195 aa). 216-273 is an ATP binding site; it reads CQVVGYPAMIKASWGGGGKGIRKVHNDDEVRALFKQVQGEVPGSPIFIMKVASQSRHL. Mg(2+)-binding residues include glutamate 339, glutamate 353, and asparagine 355. Residues glutamate 339, glutamate 353, and asparagine 355 each coordinate Mn(2+). Arginine 357 is a catalytic residue. A Biotinyl-binding domain is found at 671–745; that stretch reads LQKEHDPSKL…QAADLIARLD (75 aa). An N6-biotinyllysine modification is found at lysine 712. Positions 1502–1843 constitute a CoA carboxyltransferase N-terminal domain; that stretch reads PYKPLDAIDL…YVGGPLPIMK (342 aa). The segment at 1502–2163 is carboxyltransferase; it reads PYKPLDAIDL…EDALAKEIRE (662 aa). 3 residues coordinate CoA: arginine 1752, lysine 2053, and arginine 2055. One can recognise a CoA carboxyltransferase C-terminal domain in the interval 1847-2163; that stretch reads PPDRPVTYFP…EDALAKEIRE (317 aa).

Homodimer. It depends on Mg(2+) as a cofactor. Mn(2+) is required as a cofactor. Biotin serves as cofactor.

The protein localises to the cytoplasm. It is found in the cytosol. It carries out the reaction hydrogencarbonate + acetyl-CoA + ATP = malonyl-CoA + ADP + phosphate + H(+). The catalysed reaction is N(6)-biotinyl-L-lysyl-[protein] + hydrogencarbonate + ATP = N(6)-carboxybiotinyl-L-lysyl-[protein] + ADP + phosphate + H(+). The protein operates within lipid metabolism; malonyl-CoA biosynthesis; malonyl-CoA from acetyl-CoA: step 1/1. Multifunctional enzyme that catalyzes the carboxylation of acetyl-CoA, forming malonyl-CoA, which is used in the plastid for fatty acid synthesis and in the cytosol in various biosynthetic pathways including fatty acid elongation. The protein is Acetyl-CoA carboxylase 1 (ACC1) of Oryza sativa subsp. japonica (Rice).